Reading from the N-terminus, the 791-residue chain is Protein SEY1 (791 aa).

The Cytoplasmic segment spans residues 1–685 (MSEDGASKCQ…KRSTIKSHTH (685 aa)). The 229-residue stretch at 40–268 (GLDYHVISVF…REDYYLSGKY (229 aa)) folds into the GB1/RHD3-type G domain. 50-57 (GSQSSGKS) contacts GTP. A helical membrane pass occupies residues 686–706 (IPMWIYAIIAVLGWNEFMLVL). The Lumenal segment spans residues 707 to 709 (RNP). A helical transmembrane segment spans residues 710–730 (LFIALMLLIVGAAYTVHRLNL). Residues 731–791 (WTPLATFASA…NETKENANES (61 aa)) lie on the Cytoplasmic side of the membrane. The tract at residues 763–791 (PKNASSKPVESFEMQDLSVNETKENANES) is disordered.

The protein belongs to the TRAFAC class dynamin-like GTPase superfamily. GB1/RHD3 GTPase family. RHD3 subfamily.

It is found in the endoplasmic reticulum membrane. Cooperates with the reticulon proteins and tubule-shaping DP1 family proteins to generate and maintain the structure of the tubular endoplasmic reticulum network. Has GTPase activity, which is required for its function in ER organization. The protein is Protein SEY1 of Eremothecium gossypii (strain ATCC 10895 / CBS 109.51 / FGSC 9923 / NRRL Y-1056) (Yeast).